The following is a 457-amino-acid chain: F-box only protein 13 (457 aa).

The region spanning 64–110 (EFPMDDLNDDVLERVLSWLPTSCFFRMSSVCKRWKSSQTSKSFKLAC) is the F-box domain.

The protein is F-box only protein 13 (FBX13) of Arabidopsis thaliana (Mouse-ear cress).